The following is a 189-amino-acid chain: Casparian strip membrane protein 2 (189 aa).

The tract at residues 1–21 (MKVSTIESGEISKGASSPRKG) is disordered. The Cytoplasmic portion of the chain corresponds to 1-25 (MKVSTIESGEISKGASSPRKGMKRG). A helical transmembrane segment spans residues 26–46 (LSIMDFILRIFAAMSTLGSAL). The Extracellular portion of the chain corresponds to 47-73 (SMGTAKQTMPFATRFVRFKVSFHDLPT). A helical transmembrane segment spans residues 74–94 (FLFFVTANSIVCGYLALSLVL). Residues 95–108 (SFFHIVRTISVKSR) are Cytoplasmic-facing. The chain crosses the membrane as a helical span at residues 109–129 (ILLVFLDTVMFGLLTSGASAA). Topologically, residues 130 to 163 (AAIVYVAHYGNPSANWFPFCQQYNSFCGRISGSL) are extracellular. The helical transmembrane segment at 164–184 (VGSFIAVVIFMILILMSGISI) threads the bilayer. Residues 185–189 (SKSKH) are Cytoplasmic-facing.

The protein belongs to the Casparian strip membrane proteins (CASP) family. Homodimer and heterodimers.

Its subcellular location is the cell membrane. Its function is as follows. Regulates membrane-cell wall junctions and localized cell wall deposition. Required for establishment of the Casparian strip membrane domain (CSD) and the subsequent formation of Casparian strips, a cell wall modification of the root endodermis that determines an apoplastic barrier between the intraorganismal apoplasm and the extraorganismal apoplasm and prevents lateral diffusion. The sequence is that of Casparian strip membrane protein 2 from Medicago truncatula (Barrel medic).